A 610-amino-acid polypeptide reads, in one-letter code: ESX-5 secretion system protein EccA5 (610 aa).

Residue 357-364 participates in ATP binding; the sequence is GPPGTGKT.

The protein belongs to the CbxX/CfxQ family. In terms of assembly, part of the ESX-5 / type VII secretion system (T7SS), which is composed of cytosolic and membrane components.

The protein resides in the cytoplasm. Its function is as follows. Part of an ESX-5 / type VII specialized secretion system (T7SS), which exports several proteins. EccA5 exhibits ATPase activity and may provide energy for the export of ESX-5 substrates. The polypeptide is ESX-5 secretion system protein EccA5 (Mycobacterium bovis (strain ATCC BAA-935 / AF2122/97)).